The following is a 975-amino-acid chain: NLR family member X1 (975 aa).

The transit peptide at 1 to 86 (MRWGHHLPRA…EAIQRHRRNL (86 aa)) directs the protein to the mitochondrion. The tract at residues 75–556 (ATEAIQRHRR…RALPLLFNLI (482 aa)) is required for interaction with MAVS. Residues 160 to 483 (QTVVLYGTVG…LRFFLAPCVE (324 aa)) enclose the NACHT domain. Residue 166-173 (GTVGTGKS) participates in ATP binding. The interval 556–974 (IKVVPRVFGR…ALLEQLGSSG (419 aa)) is required for the repression of MAVS-induced interferon signaling. An LRRNT domain is found at 667–694 (RQVLPPSELLDHLFFHYEFQNQRFSAEV). LRR repeat units follow at residues 695-718 (LSSLRQLNLAGVRMTPVKCTVVAA), 724-747 (RHALDEVNLASCQLDPAGLRTLLP), 749-777 (FLRARKLGLQLNSLGPEACKDLRDLLLHD), 778-801 (QCQITTLRLSNNPLTAAGVAVLME), 811-834 (HLSLLHTGLGDEGLELLAAQLDRN), 835-857 (RQLQELNVAYNGAGDTAALALAR), 858-877 (AAREHPSLELLHLYFNELSS), and 878-899 (EGRQVLRDLGGAAEGGARVVVS). The LRRCT domain maps to 906-970 (VSEYWSVILS…GEVRALLEQL (65 aa)).

The protein belongs to the NLRP family. In terms of assembly, homohexamer. Interacts with MAVS. Interacts with TUFM. (Microbial infection) Interacts with influenza A virus protein PB1-F2. Ubiquitously expressed. Strongest expression in mammary gland, heart and muscle. Detected in HeLa, HEK293T, THP-1, HL-60, Raji and Jurkat cell lines (at protein level).

It localises to the mitochondrion outer membrane. Participates in antiviral signaling. Acts as a negative regulator of MAVS-mediated antiviral responses, through the inhibition of the virus-induced RLH (RIG-like helicase)-MAVS interaction. Instead, promotes autophagy by interacting with TUFM and subsequently recruiting the autophagy-related proteins ATG5 and ATG12. Also regulates MAVS-dependent NLRP3 inflammasome activation to attenuate apoptosis. Has no inhibitory function on NF-kappa-B signaling pathway, but enhances NF-kappa-B and JUN N-terminal kinase dependent signaling through the production of reactive oxygen species. Regulates viral mediated-inflammation and energy metabolism in a sex-dependent manner. In females, prevents uncontrolled inflammation and energy metabolism and thus, may contribute to the sex differences observed in infectious and inflammatory diseases. In Homo sapiens (Human), this protein is NLR family member X1 (NLRX1).